We begin with the raw amino-acid sequence, 156 residues long: tRNA (cytidine(34)-2'-O)-methyltransferase (156 aa).

Glycine 102, leucine 124, and serine 132 together coordinate S-adenosyl-L-methionine.

Belongs to the class IV-like SAM-binding methyltransferase superfamily. RNA methyltransferase TrmH family. TrmL subfamily. In terms of assembly, homodimer.

The protein localises to the cytoplasm. The enzyme catalyses cytidine(34) in tRNA + S-adenosyl-L-methionine = 2'-O-methylcytidine(34) in tRNA + S-adenosyl-L-homocysteine + H(+). It carries out the reaction 5-carboxymethylaminomethyluridine(34) in tRNA(Leu) + S-adenosyl-L-methionine = 5-carboxymethylaminomethyl-2'-O-methyluridine(34) in tRNA(Leu) + S-adenosyl-L-homocysteine + H(+). In terms of biological role, methylates the ribose at the nucleotide 34 wobble position in the two leucyl isoacceptors tRNA(Leu)(CmAA) and tRNA(Leu)(cmnm5UmAA). Catalyzes the methyl transfer from S-adenosyl-L-methionine to the 2'-OH of the wobble nucleotide. The protein is tRNA (cytidine(34)-2'-O)-methyltransferase of Burkholderia ambifaria (strain ATCC BAA-244 / DSM 16087 / CCUG 44356 / LMG 19182 / AMMD) (Burkholderia cepacia (strain AMMD)).